The following is a 215-amino-acid chain: 3-isopropylmalate dehydratase small subunit (215 aa).

The protein belongs to the LeuD family. LeuD type 1 subfamily. As to quaternary structure, heterodimer of LeuC and LeuD.

The enzyme catalyses (2R,3S)-3-isopropylmalate = (2S)-2-isopropylmalate. The protein operates within amino-acid biosynthesis; L-leucine biosynthesis; L-leucine from 3-methyl-2-oxobutanoate: step 2/4. In terms of biological role, catalyzes the isomerization between 2-isopropylmalate and 3-isopropylmalate, via the formation of 2-isopropylmaleate. In Marinobacter nauticus (strain ATCC 700491 / DSM 11845 / VT8) (Marinobacter aquaeolei), this protein is 3-isopropylmalate dehydratase small subunit.